Consider the following 114-residue polypeptide: Putative pterin-4-alpha-carbinolamine dehydratase (114 aa).

It belongs to the pterin-4-alpha-carbinolamine dehydratase family.

It catalyses the reaction (4aS,6R)-4a-hydroxy-L-erythro-5,6,7,8-tetrahydrobiopterin = (6R)-L-erythro-6,7-dihydrobiopterin + H2O. This Pseudoalteromonas translucida (strain TAC 125) protein is Putative pterin-4-alpha-carbinolamine dehydratase.